We begin with the raw amino-acid sequence, 101 residues long: Putative regulatory protein PrgT (101 aa).

Might be involved in the expression of prgA, but is not required for activation of the expression of prgB. This is Putative regulatory protein PrgT (prgT) from Enterococcus faecalis (strain ATCC 47077 / OG1RF).